The chain runs to 402 residues: Tryptophan synthase beta chain (402 aa).

Lys-91 is subject to N6-(pyridoxal phosphate)lysine.

Belongs to the TrpB family. As to quaternary structure, tetramer of two alpha and two beta chains. Pyridoxal 5'-phosphate is required as a cofactor.

It catalyses the reaction (1S,2R)-1-C-(indol-3-yl)glycerol 3-phosphate + L-serine = D-glyceraldehyde 3-phosphate + L-tryptophan + H2O. It functions in the pathway amino-acid biosynthesis; L-tryptophan biosynthesis; L-tryptophan from chorismate: step 5/5. The beta subunit is responsible for the synthesis of L-tryptophan from indole and L-serine. The chain is Tryptophan synthase beta chain from Streptococcus thermophilus (strain CNRZ 1066).